An 800-amino-acid polypeptide reads, in one-letter code: Phenylalanine--tRNA ligase beta subunit (800 aa).

The 116-residue stretch at 39 to 154 (TKDIKKLVVG…EAVKPGTDAL (116 aa)) folds into the tRNA-binding domain. One can recognise a B5 domain in the interval 408-483 (SFVTPIEITA…RIYGYDEIPS (76 aa)). Mg(2+) contacts are provided by Asp461, Asp467, Glu470, and Glu471. Positions 708-800 (PRFPGVTRDI…ALKKHGAIIR (93 aa)) constitute an FDX-ACB domain.

This sequence belongs to the phenylalanyl-tRNA synthetase beta subunit family. Type 1 subfamily. In terms of assembly, tetramer of two alpha and two beta subunits. Mg(2+) serves as cofactor.

It is found in the cytoplasm. It carries out the reaction tRNA(Phe) + L-phenylalanine + ATP = L-phenylalanyl-tRNA(Phe) + AMP + diphosphate + H(+). The sequence is that of Phenylalanine--tRNA ligase beta subunit from Staphylococcus epidermidis (strain ATCC 12228 / FDA PCI 1200).